Reading from the N-terminus, the 219-residue chain is Cytidylate kinase (219 aa).

21-29 (GPAASGKGT) contributes to the ATP binding site.

This sequence belongs to the cytidylate kinase family. Type 1 subfamily.

The protein localises to the cytoplasm. The catalysed reaction is CMP + ATP = CDP + ADP. The enzyme catalyses dCMP + ATP = dCDP + ADP. This chain is Cytidylate kinase, found in Rickettsia typhi (strain ATCC VR-144 / Wilmington).